A 72-amino-acid polypeptide reads, in one-letter code: Small, acid-soluble spore protein C (72 aa).

The protein belongs to the alpha/beta-type SASP family.

SASP are bound to spore DNA. They are double-stranded DNA-binding proteins that cause DNA to change to an a-like conformation. They protect the DNA backbone from chemical and enzymatic cleavage and are thus involved in dormant spore's high resistance to UV light. The polypeptide is Small, acid-soluble spore protein C (sasP-C) (Priestia megaterium (Bacillus megaterium)).